Consider the following 306-residue polypeptide: tRNA dimethylallyltransferase (306 aa).

12–19 (GPTAAGKT) is a binding site for ATP. 14 to 19 (TAAGKT) contacts substrate. Interaction with substrate tRNA regions lie at residues 37–40 (DSAL), 161–165 (QRINR), and 242–247 (RCVGYR).

This sequence belongs to the IPP transferase family. In terms of assembly, monomer. Mg(2+) is required as a cofactor.

It carries out the reaction adenosine(37) in tRNA + dimethylallyl diphosphate = N(6)-dimethylallyladenosine(37) in tRNA + diphosphate. In terms of biological role, catalyzes the transfer of a dimethylallyl group onto the adenine at position 37 in tRNAs that read codons beginning with uridine, leading to the formation of N6-(dimethylallyl)adenosine (i(6)A). The sequence is that of tRNA dimethylallyltransferase from Pseudoalteromonas translucida (strain TAC 125).